A 565-amino-acid chain; its full sequence is Proline--tRNA ligase (565 aa).

This sequence belongs to the class-II aminoacyl-tRNA synthetase family. ProS type 1 subfamily. As to quaternary structure, homodimer.

Its subcellular location is the cytoplasm. The catalysed reaction is tRNA(Pro) + L-proline + ATP = L-prolyl-tRNA(Pro) + AMP + diphosphate. Functionally, catalyzes the attachment of proline to tRNA(Pro) in a two-step reaction: proline is first activated by ATP to form Pro-AMP and then transferred to the acceptor end of tRNA(Pro). As ProRS can inadvertently accommodate and process non-cognate amino acids such as alanine and cysteine, to avoid such errors it has two additional distinct editing activities against alanine. One activity is designated as 'pretransfer' editing and involves the tRNA(Pro)-independent hydrolysis of activated Ala-AMP. The other activity is designated 'posttransfer' editing and involves deacylation of mischarged Ala-tRNA(Pro). The misacylated Cys-tRNA(Pro) is not edited by ProRS. The chain is Proline--tRNA ligase from Lactobacillus helveticus (strain DPC 4571).